A 278-amino-acid chain; its full sequence is D-aminoacyl-tRNA deacylase (278 aa).

It belongs to the DtdA deacylase family. Monomer. The cofactor is Zn(2+).

The enzyme catalyses a D-aminoacyl-tRNA + H2O = a tRNA + a D-alpha-amino acid + H(+). It carries out the reaction glycyl-tRNA(Ala) + H2O = tRNA(Ala) + glycine + H(+). D-aminoacyl-tRNA deacylase with broad substrate specificity. By recycling D-aminoacyl-tRNA to D-amino acids and free tRNA molecules, this enzyme counteracts the toxicity associated with the formation of D-aminoacyl-tRNA entities in vivo. The chain is D-aminoacyl-tRNA deacylase from Archaeoglobus fulgidus (strain ATCC 49558 / DSM 4304 / JCM 9628 / NBRC 100126 / VC-16).